The chain runs to 541 residues: Presenilin homolog (541 aa).

Composition is skewed to polar residues over residues 1 to 14 (MAAV…SSGL) and 43 to 52 (NNYGSSNQDQ). Disordered stretches follow at residues 1–52 (MAAV…NQDQ) and 69–92 (CGSR…NEME). The Cytoplasmic segment spans residues 1 to 106 (MAAVNLQASC…LKYGAQHVIK (106 aa)). The helical transmembrane segment at 107 to 127 (LFVPVSLCMLVVVATINSISF) threads the bilayer. The Lumenal portion of the chain corresponds to 128–154 (YNSTDVYLLYTPFHEQSPEPSVKFWSA). Asparagine 129 carries N-linked (GlcNAc...) asparagine glycosylation. Residues 155–175 (LANSLILMSVVVVMTFLLIVL) traverse the membrane as a helical segment. At 176–182 (YKKRCYR) the chain is on the cytoplasmic side. A helical membrane pass occupies residues 183–203 (IIHGWLILSSFMLLFIFTYLY). At 204–216 (LEELLRAYNIPMD) the chain is on the lumenal side. The chain crosses the membrane as a helical span at residues 217–237 (YPTALLIMWNFGVVGMMSIHW). The Cytoplasmic segment spans residues 238–242 (QGPLR). The helical transmembrane segment at 243–263 (LQQGYLIFVAALMALVFIKYL) threads the bilayer. The Lumenal segment spans residues 264–265 (PE). Residues 266 to 286 (WTAWAVLAAISIWDLIAVLSP) form a helical membrane-spanning segment. Aspartate 279 is an active-site residue. Residues 287-453 (RGPLRILVET…QNHPDGQEER (167 aa)) are Cytoplasmic-facing. Positions 320 to 481 (NTVTPQQSQA…ASSYGDWTTT (162 aa)) are interaction with Mettl2. Residues 327 to 350 (SQATASSSPSSSNSTTTTRATQNS) show a composition bias toward low complexity. Disordered stretches follow at residues 327–379 (SQAT…DGSV) and 421–449 (EVQS…HPDG). Polar residues-rich tracts occupy residues 361 to 370 (GQRTGNSHPR) and 421 to 443 (EVQS…TAPD). A helical membrane pass occupies residues 454–474 (GIKLGLGDFIFYSVLVGKASS). The active site involves aspartate 461. Topologically, residues 475–481 (YGDWTTT) are lumenal. The helical transmembrane segment at 482-502 (IACFVAILIGLCLTLLLLAIW) threads the bilayer. At 503 to 506 (RKAL) the chain is on the cytoplasmic side. A PAL motif is present at residues 507–509 (PAL). The segment at residues 507–527 (PALPISITFGLIFCFATSAVV) is an intramembrane region (helical). Residues 528-541 (KPFMEDLSAKQVFI) lie on the Cytoplasmic side of the membrane.

This sequence belongs to the peptidase A22A family. As to quaternary structure, homodimer. Component of the gamma-secretase complex, a complex composed of a presenilin (Psn) homodimer, nicastrin (Nct), Aph-1 and Pen-2. Interacts with Mettl2. Isoform 2 shows a better interaction with Mettl2 than isoform 1. Post-translationally, cleaved. The cleavage, which probably takes place between the 6th and the 7th transmembrane regions, may be required for activation of the gamma-secretase activity. In terms of tissue distribution, maternally expressed in nurse and follicle cells. In early embryos, expressed in all or most cells and later increases in CNS and epidermal tissues. In larvae, expression is seen in all imaginal disks, brain and optic lobes. In pupae, expression is seen in eye disk and brain.

It is found in the endoplasmic reticulum membrane. The protein localises to the golgi apparatus membrane. Functionally, probable catalytic subunit of the gamma-secretase complex, an endoprotease complex that catalyzes the intramembrane cleavage of integral membrane proteins such as Notch receptor. Required for S3 cleavage of Notch, which releases activated Notch protein from the cell membrane. Involved in the patterning of the optic lobes. The protein is Presenilin homolog (Psn) of Drosophila melanogaster (Fruit fly).